The primary structure comprises 246 residues: 2-deoxyglucose-6-phosphate phosphatase 1 (246 aa).

Aspartate 83 (nucleophile) is an active-site residue. A Mg(2+)-binding site is contributed by aspartate 83. Substrate is bound by residues aspartate 83, glutamate 92, and 146–149 (DVKN). Aspartate 183 contributes to the Mg(2+) binding site.

The protein belongs to the HAD-like hydrolase superfamily. DOG/GPP family. Mg(2+) serves as cofactor.

It catalyses the reaction 2-deoxy-D-glucose 6-phosphate + H2O = 2-deoxy-D-glucose + phosphate. Its function is as follows. Phosphatase that is active on 2-deoxy-D-glucose 6-phosphate (2-DOG-6P), as well as on fructose-1-P. This chain is 2-deoxyglucose-6-phosphate phosphatase 1, found in Saccharomyces cerevisiae (strain ATCC 204508 / S288c) (Baker's yeast).